Consider the following 304-residue polypeptide: UDP-3-O-acyl-N-acetylglucosamine deacetylase (304 aa).

Residues His-77, His-233, and Asp-237 each coordinate Zn(2+). The active-site Proton donor is the His-260.

Belongs to the LpxC family. Zn(2+) is required as a cofactor.

It carries out the reaction a UDP-3-O-[(3R)-3-hydroxyacyl]-N-acetyl-alpha-D-glucosamine + H2O = a UDP-3-O-[(3R)-3-hydroxyacyl]-alpha-D-glucosamine + acetate. It functions in the pathway glycolipid biosynthesis; lipid IV(A) biosynthesis; lipid IV(A) from (3R)-3-hydroxytetradecanoyl-[acyl-carrier-protein] and UDP-N-acetyl-alpha-D-glucosamine: step 2/6. Catalyzes the hydrolysis of UDP-3-O-myristoyl-N-acetylglucosamine to form UDP-3-O-myristoylglucosamine and acetate, the committed step in lipid A biosynthesis. In Lawsonia intracellularis (strain PHE/MN1-00), this protein is UDP-3-O-acyl-N-acetylglucosamine deacetylase.